A 203-amino-acid polypeptide reads, in one-letter code: ATP-dependent Clp protease proteolytic subunit (203 aa).

The active-site Nucleophile is S107. H132 is a catalytic residue.

Belongs to the peptidase S14 family. As to quaternary structure, fourteen ClpP subunits assemble into 2 heptameric rings which stack back to back to give a disk-like structure with a central cavity, resembling the structure of eukaryotic proteasomes.

Its subcellular location is the cytoplasm. It catalyses the reaction Hydrolysis of proteins to small peptides in the presence of ATP and magnesium. alpha-casein is the usual test substrate. In the absence of ATP, only oligopeptides shorter than five residues are hydrolyzed (such as succinyl-Leu-Tyr-|-NHMec, and Leu-Tyr-Leu-|-Tyr-Trp, in which cleavage of the -Tyr-|-Leu- and -Tyr-|-Trp bonds also occurs).. In terms of biological role, cleaves peptides in various proteins in a process that requires ATP hydrolysis. Has a chymotrypsin-like activity. Plays a major role in the degradation of misfolded proteins. The polypeptide is ATP-dependent Clp protease proteolytic subunit (Shewanella pealeana (strain ATCC 700345 / ANG-SQ1)).